A 25-amino-acid chain; its full sequence is Tubulin alpha chain (25 aa).

Gln11 lines the GTP pocket.

Belongs to the tubulin family. In terms of assembly, dimer of alpha and beta chains. A typical microtubule is a hollow water-filled tube with an outer diameter of 25 nm and an inner diameter of 15 nM. Alpha-beta heterodimers associate head-to-tail to form protofilaments running lengthwise along the microtubule wall with the beta-tubulin subunit facing the microtubule plus end conferring a structural polarity. Microtubules usually have 13 protofilaments but different protofilament numbers can be found in some organisms and specialized cells. The cofactor is Mg(2+).

The protein localises to the cytoplasm. The protein resides in the cytoskeleton. The catalysed reaction is GTP + H2O = GDP + phosphate + H(+). Functionally, tubulin is the major constituent of microtubules, a cylinder consisting of laterally associated linear protofilaments composed of alpha- and beta-tubulin heterodimers. Microtubules grow by the addition of GTP-tubulin dimers to the microtubule end, where a stabilizing cap forms. Below the cap, tubulin dimers are in GDP-bound state, owing to GTPase activity of alpha-tubulin. The sequence is that of Tubulin alpha chain from Leptomonas seymouri.